The sequence spans 269 residues: GTP cyclohydrolase FolE2 (269 aa).

The protein belongs to the GTP cyclohydrolase IV family.

The enzyme catalyses GTP + H2O = 7,8-dihydroneopterin 3'-triphosphate + formate + H(+). It functions in the pathway cofactor biosynthesis; 7,8-dihydroneopterin triphosphate biosynthesis; 7,8-dihydroneopterin triphosphate from GTP: step 1/1. Converts GTP to 7,8-dihydroneopterin triphosphate. The polypeptide is GTP cyclohydrolase FolE2 (Burkholderia multivorans (strain ATCC 17616 / 249)).